Here is a 211-residue protein sequence, read N- to C-terminus: Putative ATP-dependent Clp protease proteolytic subunit-like (211 aa).

Residues methionine 1–serine 24 are disordered. Histidine 129 is a catalytic residue.

It belongs to the peptidase S14 family.

Has lost one of the conserved residue (Ser) proposed to be part of the active site. Therefore it could be inactive. The sequence is that of Putative ATP-dependent Clp protease proteolytic subunit-like from Streptomyces coelicolor (strain ATCC BAA-471 / A3(2) / M145).